The sequence spans 144 residues: Gastric inhibitory polypeptide (144 aa).

Residues 1 to 21 (MVALKTCSLLLVLLFLAVGLG) form the signal peptide. Propeptides lie at residues 22 to 42 (EKEE…PRGP) and 87 to 144 (EARA…LRSQ). Residues 94 to 113 (AGQSQGKEDKEAQESSLPKS) are disordered.

This sequence belongs to the glucagon family.

The protein resides in the secreted. Its function is as follows. Potent stimulator of insulin secretion and relatively poor inhibitor of gastric acid secretion. The polypeptide is Gastric inhibitory polypeptide (Gip) (Mus musculus (Mouse)).